A 406-amino-acid chain; its full sequence is Kelch domain-containing protein 2 (406 aa).

6 Kelch repeats span residues 31–85 (ERSG…NTEG), 92–136 (SGSC…ERID), 148–207 (LGVW…AWSQ), 221–259 (HACA…NELI), 271–311 (HSLT…IQFN), and 322–359 (HTAC…IFSV).

Component of a CRL2(KLHDC2) E3 ubiquitin-protein ligase complex, also named ECS(KLHDC2) complex, composed of CUL2, Elongin BC (ELOB and ELOC), RBX1 and substrate-specific adapter KLHDC2. May form oligomers as a KLHDC2-ELOB-ELOC complex; this interaction is autoinhibitory for the E3 ligase complex as the substrate-binding site of KLHDC2 is blocked in the oligomer. Interacts with CREB3; interaction is direct and specific as it does not interact with CREB1, ATF4, ATF6, JUN, FOS, CEBPA or herpes simplex virus transactivator VP16. In terms of processing, autoubiquitinated by the CRL2(KLHDC2) E3 ligase complex.

Its subcellular location is the nucleus. It participates in protein modification; protein ubiquitination. In terms of biological role, substrate-recognition component of a Cul2-RING (CRL2) E3 ubiquitin-protein ligase complex of the DesCEND (destruction via C-end degrons) pathway, which recognizes a C-degron located at the extreme C terminus of target proteins, leading to their ubiquitination and degradation. The C-degron recognized by the DesCEND pathway is usually a motif of less than ten residues and can be present in full-length proteins, truncated proteins or proteolytically cleaved forms. The CRL2(KLHDC2) complex specifically recognizes proteins with a diglycine (Gly-Gly) at the C-terminus, leading to their ubiquitination and degradation. The CRL2(KLHDC2) complex mediates ubiquitination and degradation of truncated SELENOK and SELENOS selenoproteins produced by failed UGA/Sec decoding, which end with a diglycine. The CRL2(KLHDC2) complex also recognizes proteolytically cleaved proteins ending with Gly-Gly, such as the N-terminal fragment of USP1, leading to their degradation. May also act as an indirect repressor of CREB3-mediated transcription by interfering with CREB3-DNA-binding. The chain is Kelch domain-containing protein 2 from Mus musculus (Mouse).